The chain runs to 127 residues: Glycine cleavage system H protein (127 aa).

Positions 24-105 (TLTVGVTDHA…AYAAWLFKLK (82 aa)) constitute a Lipoyl-binding domain. K65 carries the post-translational modification N6-lipoyllysine.

This sequence belongs to the GcvH family. As to quaternary structure, the glycine cleavage system is composed of four proteins: P, T, L and H. The cofactor is (R)-lipoate.

Functionally, the glycine cleavage system catalyzes the degradation of glycine. The H protein shuttles the methylamine group of glycine from the P protein to the T protein. The polypeptide is Glycine cleavage system H protein (Azoarcus sp. (strain BH72)).